Consider the following 131-residue polypeptide: uncharacterized protein (131 aa).

Over residues 31-40 (AAATSRAAPL) the composition is skewed to low complexity. The tract at residues 31 to 131 (AAATSRAAPL…EAKTEQTKTP (101 aa)) is disordered.

This is an uncharacterized protein from Homo sapiens (Human).